The following is a 185-amino-acid chain: Ribosome-recycling factor (185 aa).

Belongs to the RRF family.

Its subcellular location is the cytoplasm. Functionally, responsible for the release of ribosomes from messenger RNA at the termination of protein biosynthesis. May increase the efficiency of translation by recycling ribosomes from one round of translation to another. The chain is Ribosome-recycling factor from Ehrlichia chaffeensis (strain ATCC CRL-10679 / Arkansas).